Reading from the N-terminus, the 144-residue chain is Large ribosomal subunit protein uL11 (144 aa).

Belongs to the universal ribosomal protein uL11 family. As to quaternary structure, part of the ribosomal stalk of the 50S ribosomal subunit. Interacts with L10 and the large rRNA to form the base of the stalk. L10 forms an elongated spine to which L12 dimers bind in a sequential fashion forming a multimeric L10(L12)X complex. In terms of processing, one or more lysine residues are methylated.

Forms part of the ribosomal stalk which helps the ribosome interact with GTP-bound translation factors. The sequence is that of Large ribosomal subunit protein uL11 from Granulibacter bethesdensis (strain ATCC BAA-1260 / CGDNIH1).